The sequence spans 353 residues: MEINVQAIVIDNGSDTCKAGFVGEEAPRSEFPSIVGIDQNDKDSYVGNEAQSKRGILTLKYPIERGIITNWDDMEKIWHHAFYNELGVAPEENIVVLSESPLNPEENREKMAQIMFETFKTPAIYVENQAVFSIYNSGRMTGIVLDSGDSASHVVPVYEGLALPLATSSLGFAGCDLTDQMSLLLNDLGYNLEREIVRDIKEKLSYVSSDFLWEIDDPSLEKSYELPDGQVITIGKELLACSEGLFLPYVFFGTNLDGIDKAIYNSIMKCDVDIHNDLYGNVVLSGGSTMFPGIEYRMYKELTQLAPSTTEIVINAPPERKNSVWIGGSILGLVPNFPELCFDKEDYDEYGRL.

It belongs to the actin family.

Its subcellular location is the cytoplasm. It localises to the cytoskeleton. It carries out the reaction ATP + H2O = ADP + phosphate + H(+). Functionally, actins are highly conserved proteins that are involved in various types of cell motility and are ubiquitously expressed in all eukaryotic cells. Multiple isoforms are involved in various cellular functions such as cytoskeleton structure, cell mobility, chromosome movement and muscle contraction. This Dictyostelium discoideum (Social amoeba) protein is Putative actin-28 (act28).